We begin with the raw amino-acid sequence, 103 residues long: Pseudonajatoxin b homolog (103 aa).

An N-terminal signal peptide occupies residues 1–21 (MKTLLLTLVVVTIVCLDLGYT). 5 cysteine pairs are disulfide-bonded: cysteine 24/cysteine 42, cysteine 35/cysteine 63, cysteine 48/cysteine 52, cysteine 67/cysteine 79, and cysteine 80/cysteine 85.

It belongs to the three-finger toxin family. Long-chain subfamily. Type II alpha-neurotoxin sub-subfamily. As to expression, expressed by the venom gland.

The protein resides in the secreted. Functionally, binds with high affinity to muscular (alpha-1/CHRNA1) and neuronal (alpha-7/CHRNA7) nicotinic acetylcholine receptor (nAChR) and inhibits acetylcholine from binding to the receptor, thereby impairing neuromuscular and neuronal transmission. The polypeptide is Pseudonajatoxin b homolog (Pseudonaja textilis (Eastern brown snake)).